Consider the following 193-residue polypeptide: Ion-translocating oxidoreductase complex subunit A (193 aa).

6 helical membrane-spanning segments follow: residues 5–25, 39–59, 67–87, 102–122, 134–154, and 171–191; these read LLLLIGTVLVNNFVLVKFLGL, IGMGLATTFVLTLASVCSYLV, LGIEYLRTMSFILVIAVVVQF, VLGIFLPLITTNCAVLGVALL, IIYGFGAAVGFSLVLILFSAM, and SIAMITAGLMSLAFMGFTGLV.

This sequence belongs to the NqrDE/RnfAE family. As to quaternary structure, the complex is composed of six subunits: RnfA, RnfB, RnfC, RnfD, RnfE and RnfG.

It is found in the cell inner membrane. Its function is as follows. Part of a membrane-bound complex that couples electron transfer with translocation of ions across the membrane. The chain is Ion-translocating oxidoreductase complex subunit A from Aliivibrio fischeri (strain ATCC 700601 / ES114) (Vibrio fischeri).